Reading from the N-terminus, the 157-residue chain is Crossover junction endodeoxyribonuclease RuvC (157 aa).

Active-site residues include Asp7, Glu67, and Asp140. Mg(2+) contacts are provided by Asp7, Glu67, and Asp140.

The protein belongs to the RuvC family. Homodimer which binds Holliday junction (HJ) DNA. The HJ becomes 2-fold symmetrical on binding to RuvC with unstacked arms; it has a different conformation from HJ DNA in complex with RuvA. In the full resolvosome a probable DNA-RuvA(4)-RuvB(12)-RuvC(2) complex forms which resolves the HJ. It depends on Mg(2+) as a cofactor.

It localises to the cytoplasm. The enzyme catalyses Endonucleolytic cleavage at a junction such as a reciprocal single-stranded crossover between two homologous DNA duplexes (Holliday junction).. Its function is as follows. The RuvA-RuvB-RuvC complex processes Holliday junction (HJ) DNA during genetic recombination and DNA repair. Endonuclease that resolves HJ intermediates. Cleaves cruciform DNA by making single-stranded nicks across the HJ at symmetrical positions within the homologous arms, yielding a 5'-phosphate and a 3'-hydroxyl group; requires a central core of homology in the junction. The consensus cleavage sequence is 5'-(A/T)TT(C/G)-3'. Cleavage occurs on the 3'-side of the TT dinucleotide at the point of strand exchange. HJ branch migration catalyzed by RuvA-RuvB allows RuvC to scan DNA until it finds its consensus sequence, where it cleaves and resolves the cruciform DNA. This Rickettsia bellii (strain RML369-C) protein is Crossover junction endodeoxyribonuclease RuvC.